Here is a 571-residue protein sequence, read N- to C-terminus: CDT1-like protein a, chloroplastic (571 aa).

Residues 1–79 (MSTPGSSRSI…GSRRRSEDPV (79 aa)) constitute a chloroplast transit peptide. Disordered regions lie at residues 1–110 (MSTP…EKEK) and 288–315 (TTSSLAKPTSSQINIAPTPTKPTSTPAK). Residues 22–38 (SPSSKSQTGNPNPSSVA) are compositionally biased toward polar residues. Residues 81 to 96 (SSAKSRLFFDSSSSSP) are compositionally biased toward low complexity. Over residues 288 to 302 (TTSSLAKPTSSQINI) the composition is skewed to polar residues. Positions 303–315 (APTPTKPTSTPAK) are enriched in low complexity.

It belongs to the Cdt1 family. As to quaternary structure, binds to ARC6. In terms of processing, phosphorylated by cyclin D- and cyclin A-containing CDKA-1, and thus targeted to proteasome-mediated proteolysis. Expressed in proliferating (e.g. shoot and root apical meristems, organ primordia) and endoreplicating cells (e.g. guard cells and stomatal lineage, developing trichomes).

The protein resides in the plastid. The protein localises to the chloroplast. Member of the pre-replication complex. Component of the plastid division machinery. Promotes polyloidization and regulates endoreduplication. Involved in the coordination of cell and plastid division. The sequence is that of CDT1-like protein a, chloroplastic (CDT1A) from Arabidopsis thaliana (Mouse-ear cress).